A 336-amino-acid chain; its full sequence is DNA-directed RNA polymerase subunit alpha (336 aa).

The alpha N-terminal domain (alpha-NTD) stretch occupies residues 1 to 232 (MIQKNWQELI…DQLGVFVNFD (232 aa)). The segment at 248 to 336 (FNPALLKKVD…DLAKRYEDQY (89 aa)) is alpha C-terminal domain (alpha-CTD).

It belongs to the RNA polymerase alpha chain family. Homodimer. The RNAP catalytic core consists of 2 alpha, 1 beta, 1 beta' and 1 omega subunit. When a sigma factor is associated with the core the holoenzyme is formed, which can initiate transcription.

The enzyme catalyses RNA(n) + a ribonucleoside 5'-triphosphate = RNA(n+1) + diphosphate. Functionally, DNA-dependent RNA polymerase catalyzes the transcription of DNA into RNA using the four ribonucleoside triphosphates as substrates. This is DNA-directed RNA polymerase subunit alpha from Rhizobium etli (strain CIAT 652).